The sequence spans 269 residues: 4-hydroxy-4-methyl-2-oxoglutarate aldolase cghB (269 aa).

His-48 functions as the Proton acceptor in the catalytic mechanism. The a divalent metal cation site is built by Glu-155 and Asp-181. Asp-181 is a substrate binding site.

It belongs to the HpcH/HpaI aldolase family. As to quaternary structure, homohexamer; trimer of dimers. The cofactor is Co(2+). It depends on Mn(2+) as a cofactor. Zn(2+) is required as a cofactor. Fe(2+) serves as cofactor. Requires Mg(2+) as cofactor.

It catalyses the reaction 4-hydroxy-4-methyl-2-oxoglutarate = 2 pyruvate. Its pathway is secondary metabolite biosynthesis. Functionally, 4-hydroxy-4-methyl-2-oxoglutarate aldolase; part of the gene cluster that mediates the biosynthesis of the tetramic acid Sch210972, a potential anti-HIV fungal natural product that contains a decalin core. The PKS module of cghG together with the enoylreductase cghC catalyze the formation of the polyketide unit which is then conjugated to 4-hydroxyl-4-methyl glutamate (HMG) by the condensation domain of the cghG NRPS module. One unique structural feature of Sch210972 is the tetramic acid motif proposed to be derived from the non-proteinogenic amino acid HMG, by a Dieckmann-type condensation catalyzed by the reductase domain of cghG. The aldolase cghB catalyzes the aldol condensation of 2 molecules of pyruvic acid to yield the intermediate 4-hydroxyl-4-methyl-2-oxoglutarate (HMOG), which can then be stereoselectively transaminated by an unidentified enzyme to form HMG. The Diels-Alderase cghA then uses the Dieckmann product released by cghG as substrate and catalyzes the Diels-Alder cycloaddition to form the decalin ring of Sch210972. CghA also suppresses the nonenzymatic formation of the alternative stereoisomer. The sequence is that of 4-hydroxy-4-methyl-2-oxoglutarate aldolase cghB from Chaetomium globosum (strain ATCC 6205 / CBS 148.51 / DSM 1962 / NBRC 6347 / NRRL 1970) (Soil fungus).